A 917-amino-acid chain; its full sequence is Catenin alpha (917 aa).

Phosphothreonine is present on residues Thr-643 and Thr-645. Phosphoserine is present on residues Ser-659 and Ser-662. Basic and acidic residues predominate over residues 878 to 890; that stretch reads PLVRPEKPEEVRA. Positions 878 to 905 are disordered; the sequence is PLVRPEKPEEVRAKVRKGSQKKVQNPIH.

It belongs to the vinculin/alpha-catenin family. In terms of assembly, interacts with arm/armadillo protein. In terms of processing, rapidly phosphorylated by CK2 and more slowly by CK1.

Its subcellular location is the cytoplasm. It localises to the cytoskeleton. It is found in the cell junction. The protein localises to the adherens junction. The protein resides in the cell membrane. Its function is as follows. Associates with the cytoplasmic domain of a variety of cadherins. The association of catenins to cadherins produces a complex which is linked to the actin filament network, and which seems to be of primary importance for cadherins cell-adhesion properties. The polypeptide is Catenin alpha (Drosophila melanogaster (Fruit fly)).